The primary structure comprises 521 residues: NAD(P)H-quinone oxidoreductase subunit 2 (521 aa).

14 consecutive transmembrane segments (helical) span residues 14 to 34, 42 to 62, 79 to 99, 109 to 129, 132 to 152, 167 to 187, 207 to 227, 241 to 261, 275 to 295, 303 to 323, 331 to 351, 375 to 395, 397 to 417, and 463 to 483; these read VILPEGIVIVTLLTVLVTDLI, LTPALAITGLSAAIAVLTLQW, LSIVFRGIVLLSAAVTILLSI, LGEFITILLTASLGGMFLSGA, LVTIFVSLETLSISSYLLTGY, LLIGAASSAIFLYGVSLLYGL, LALLISLIFVIAGIAFKISAV, PTPIVAFLSVGSKAAGFALAI, WHFVFTALAILSLVLGNVVAL, LLAYSSIAQAGFVMIGLIAGT, VYYLLIYLFMNLGGFACVILF, LGLSLCLLSLGGIPPLAGFFG, LYLFWAGWQAGLYGLVLLALI, and AGLVVCVIATAVAGILSNPLF.

This sequence belongs to the complex I subunit 2 family. As to quaternary structure, NDH-1 can be composed of about 15 different subunits; different subcomplexes with different compositions have been identified which probably have different functions.

The protein localises to the cellular thylakoid membrane. The enzyme catalyses a plastoquinone + NADH + (n+1) H(+)(in) = a plastoquinol + NAD(+) + n H(+)(out). It catalyses the reaction a plastoquinone + NADPH + (n+1) H(+)(in) = a plastoquinol + NADP(+) + n H(+)(out). In terms of biological role, NDH-1 shuttles electrons from an unknown electron donor, via FMN and iron-sulfur (Fe-S) centers, to quinones in the respiratory and/or the photosynthetic chain. The immediate electron acceptor for the enzyme in this species is believed to be plastoquinone. Couples the redox reaction to proton translocation, and thus conserves the redox energy in a proton gradient. Cyanobacterial NDH-1 also plays a role in inorganic carbon-concentration. This Synechococcus elongatus (strain ATCC 33912 / PCC 7942 / FACHB-805) (Anacystis nidulans R2) protein is NAD(P)H-quinone oxidoreductase subunit 2.